The chain runs to 322 residues: tRNA-dihydrouridine(16) synthase (322 aa).

Residues 7 to 9 (PME) and glutamine 68 each bind FMN. Cysteine 98 functions as the Proton donor in the catalytic mechanism. FMN is bound by residues lysine 139, 200-202 (NGE), and 224-225 (CR).

It belongs to the Dus family. DusC subfamily. FMN is required as a cofactor.

It carries out the reaction 5,6-dihydrouridine(16) in tRNA + NADP(+) = uridine(16) in tRNA + NADPH + H(+). It catalyses the reaction 5,6-dihydrouridine(16) in tRNA + NAD(+) = uridine(16) in tRNA + NADH + H(+). Catalyzes the synthesis of 5,6-dihydrouridine (D), a modified base found in the D-loop of most tRNAs, via the reduction of the C5-C6 double bond in target uridines. Specifically modifies U16 in tRNAs. This is tRNA-dihydrouridine(16) synthase from Vibrio parahaemolyticus serotype O3:K6 (strain RIMD 2210633).